The sequence spans 667 residues: Threonine--tRNA ligase (667 aa).

The TGS domain occupies Met-1 to Arg-64. The segment at Asp-245 to Pro-553 is catalytic. Cys-347, His-398, and His-530 together coordinate Zn(2+).

Belongs to the class-II aminoacyl-tRNA synthetase family. As to quaternary structure, homodimer. It depends on Zn(2+) as a cofactor.

The protein localises to the cytoplasm. The enzyme catalyses tRNA(Thr) + L-threonine + ATP = L-threonyl-tRNA(Thr) + AMP + diphosphate + H(+). Functionally, catalyzes the attachment of threonine to tRNA(Thr) in a two-step reaction: L-threonine is first activated by ATP to form Thr-AMP and then transferred to the acceptor end of tRNA(Thr). Also edits incorrectly charged L-seryl-tRNA(Thr). In Agrobacterium fabrum (strain C58 / ATCC 33970) (Agrobacterium tumefaciens (strain C58)), this protein is Threonine--tRNA ligase.